The sequence spans 807 residues: Glycerol-3-phosphate acyltransferase (807 aa).

An HXXXXD motif motif is present at residues 305–310 (CHRSHM).

Belongs to the GPAT/DAPAT family.

It localises to the cell inner membrane. It carries out the reaction sn-glycerol 3-phosphate + an acyl-CoA = a 1-acyl-sn-glycero-3-phosphate + CoA. It functions in the pathway phospholipid metabolism; CDP-diacylglycerol biosynthesis; CDP-diacylglycerol from sn-glycerol 3-phosphate: step 1/3. This chain is Glycerol-3-phosphate acyltransferase, found in Shigella boydii serotype 18 (strain CDC 3083-94 / BS512).